Reading from the N-terminus, the 428-residue chain is L-lysine N6-monooxygenase MbtG (428 aa).

Positions 1-20 (MSTLAILGAGAKAVAVAAKA) are cleaved as a signal peptide.

This sequence belongs to the lysine N(6)-hydroxylase/L-ornithine N(5)-oxygenase family. It depends on FAD as a cofactor.

The enzyme catalyses L-lysine + NADPH + O2 = N(6)-hydroxy-L-lysine + NADP(+) + H2O. Its pathway is siderophore biosynthesis; mycobactin biosynthesis. Its function is as follows. Flavoprotein monooxygenase required for N-hydroxylation of the two acylated lysine residues during mycobactin assembly, thus producing the hydroxamate groups necessary for iron sequestration. Is also able, but less efficiently, to hydroxylate L-lysine (non acylated) in vitro. This is L-lysine N6-monooxygenase MbtG (mbtG) from Mycolicibacterium paratuberculosis (strain ATCC BAA-968 / K-10) (Mycobacterium paratuberculosis).